Consider the following 542-residue polypeptide: Cytochrome P450 monooxygenase 91 (542 aa).

An N-terminal signal peptide occupies residues Met1 to Leu22. Asn299 and Asn392 each carry an N-linked (GlcNAc...) asparagine glycan. Residue Cys482 coordinates heme.

The protein belongs to the cytochrome P450 family. It depends on heme as a cofactor.

The protein operates within secondary metabolite biosynthesis. Cytochrome P450 monooxygenase that is able to use dehydroabietic acid as a substrate for oxidation. This Postia placenta (strain ATCC 44394 / Madison 698-R) (Brown rot fungus) protein is Cytochrome P450 monooxygenase 91.